The following is a 204-amino-acid chain: Large ribosomal subunit protein eL15A (204 aa).

The interval 164 to 185 is disordered; it reads LTATGKKSRGINKGHKFNNTKA. Over residues 169-185 the composition is skewed to basic residues; sequence KKSRGINKGHKFNNTKA.

Belongs to the eukaryotic ribosomal protein eL15 family. As to quaternary structure, component of the large ribosomal subunit (LSU). Mature yeast ribosomes consist of a small (40S) and a large (60S) subunit. The 40S small subunit contains 1 molecule of ribosomal RNA (18S rRNA) and 33 different proteins (encoded by 57 genes). The large 60S subunit contains 3 rRNA molecules (25S, 5.8S and 5S rRNA) and 46 different proteins (encoded by 81 genes).

Its subcellular location is the cytoplasm. Its function is as follows. Component of the ribosome, a large ribonucleoprotein complex responsible for the synthesis of proteins in the cell. The small ribosomal subunit (SSU) binds messenger RNAs (mRNAs) and translates the encoded message by selecting cognate aminoacyl-transfer RNA (tRNA) molecules. The large subunit (LSU) contains the ribosomal catalytic site termed the peptidyl transferase center (PTC), which catalyzes the formation of peptide bonds, thereby polymerizing the amino acids delivered by tRNAs into a polypeptide chain. The nascent polypeptides leave the ribosome through a tunnel in the LSU and interact with protein factors that function in enzymatic processing, targeting, and the membrane insertion of nascent chains at the exit of the ribosomal tunnel. In Saccharomyces cerevisiae (strain ATCC 204508 / S288c) (Baker's yeast), this protein is Large ribosomal subunit protein eL15A.